The following is a 144-amino-acid chain: 3-dehydroquinate dehydratase (144 aa).

Tyrosine 24 functions as the Proton acceptor in the catalytic mechanism. Residues asparagine 76, histidine 82, and aspartate 89 each contribute to the substrate site. Histidine 102 (proton donor) is an active-site residue. Substrate contacts are provided by residues leucine 103–serine 104 and arginine 113.

The protein belongs to the type-II 3-dehydroquinase family. In terms of assembly, homododecamer.

It carries out the reaction 3-dehydroquinate = 3-dehydroshikimate + H2O. Its pathway is metabolic intermediate biosynthesis; chorismate biosynthesis; chorismate from D-erythrose 4-phosphate and phosphoenolpyruvate: step 3/7. Its function is as follows. Catalyzes a trans-dehydration via an enolate intermediate. The polypeptide is 3-dehydroquinate dehydratase (Bordetella bronchiseptica (strain ATCC BAA-588 / NCTC 13252 / RB50) (Alcaligenes bronchisepticus)).